Here is a 98-residue protein sequence, read N- to C-terminus: NADH-ubiquinone oxidoreductase chain 4L (98 aa).

The next 3 membrane-spanning stretches (helical) occupy residues 1–21, 26–46, and 59–79; these read MTPI…GLAF, LLSA…ALSL, and APML…ALMV.

This sequence belongs to the complex I subunit 4L family.

The protein resides in the mitochondrion membrane. The enzyme catalyses a ubiquinone + NADH + 5 H(+)(in) = a ubiquinol + NAD(+) + 4 H(+)(out). Core subunit of the mitochondrial membrane respiratory chain NADH dehydrogenase (Complex I) which catalyzes electron transfer from NADH through the respiratory chain, using ubiquinone as an electron acceptor. Part of the enzyme membrane arm which is embedded in the lipid bilayer and involved in proton translocation. In Tetraodon nigroviridis (Spotted green pufferfish), this protein is NADH-ubiquinone oxidoreductase chain 4L (MT-ND4L).